A 916-amino-acid polypeptide reads, in one-letter code: Isoleucine--tRNA ligase (916 aa).

Residues 58–68 (PYANGHLHIGH) carry the 'HIGH' region motif. Glutamate 568 is an L-isoleucyl-5'-AMP binding site. Positions 609-613 (KMSKS) match the 'KMSKS' region motif. Lysine 612 serves as a coordination point for ATP. Zn(2+)-binding residues include cysteine 891, cysteine 894, cysteine 906, and cysteine 909.

Belongs to the class-I aminoacyl-tRNA synthetase family. IleS type 1 subfamily. In terms of assembly, monomer. The cofactor is Zn(2+).

It is found in the cytoplasm. It carries out the reaction tRNA(Ile) + L-isoleucine + ATP = L-isoleucyl-tRNA(Ile) + AMP + diphosphate. Functionally, catalyzes the attachment of isoleucine to tRNA(Ile). As IleRS can inadvertently accommodate and process structurally similar amino acids such as valine, to avoid such errors it has two additional distinct tRNA(Ile)-dependent editing activities. One activity is designated as 'pretransfer' editing and involves the hydrolysis of activated Val-AMP. The other activity is designated 'posttransfer' editing and involves deacylation of mischarged Val-tRNA(Ile). In Campylobacter fetus subsp. fetus (strain 82-40), this protein is Isoleucine--tRNA ligase.